The sequence spans 754 residues: 5-methyltetrahydropteroyltriglutamate--homocysteine methyltransferase (754 aa).

Residues 19 to 22 (RELK) and Lys-121 contribute to the 5-methyltetrahydropteroyltri-L-glutamate site. L-homocysteine contacts are provided by residues 423 to 425 (IGS) and Glu-476. Residues 423 to 425 (IGS) and Glu-476 each bind L-methionine. Residues 507–508 (RC) and Trp-553 each bind 5-methyltetrahydropteroyltri-L-glutamate. Asp-591 provides a ligand contact to L-homocysteine. Asp-591 provides a ligand contact to L-methionine. Position 597 (Glu-597) interacts with 5-methyltetrahydropteroyltri-L-glutamate. His-633, Cys-635, and Glu-657 together coordinate Zn(2+). His-686 serves as the catalytic Proton donor. Zn(2+) is bound at residue Cys-718.

This sequence belongs to the vitamin-B12 independent methionine synthase family. The cofactor is Zn(2+).

The enzyme catalyses 5-methyltetrahydropteroyltri-L-glutamate + L-homocysteine = tetrahydropteroyltri-L-glutamate + L-methionine. The protein operates within amino-acid biosynthesis; L-methionine biosynthesis via de novo pathway; L-methionine from L-homocysteine (MetE route): step 1/1. Functionally, catalyzes the transfer of a methyl group from 5-methyltetrahydrofolate to homocysteine resulting in methionine formation. In Corynebacterium efficiens (strain DSM 44549 / YS-314 / AJ 12310 / JCM 11189 / NBRC 100395), this protein is 5-methyltetrahydropteroyltriglutamate--homocysteine methyltransferase.